A 297-amino-acid chain; its full sequence is 4-diphosphocytidyl-2-C-methyl-D-erythritol kinase (297 aa).

K14 is an active-site residue. An ATP-binding site is contributed by 99-109 (PVAAGIGGGSA). Residue D141 is part of the active site.

This sequence belongs to the GHMP kinase family. IspE subfamily.

The catalysed reaction is 4-CDP-2-C-methyl-D-erythritol + ATP = 4-CDP-2-C-methyl-D-erythritol 2-phosphate + ADP + H(+). The protein operates within isoprenoid biosynthesis; isopentenyl diphosphate biosynthesis via DXP pathway; isopentenyl diphosphate from 1-deoxy-D-xylulose 5-phosphate: step 3/6. Its function is as follows. Catalyzes the phosphorylation of the position 2 hydroxy group of 4-diphosphocytidyl-2C-methyl-D-erythritol. The chain is 4-diphosphocytidyl-2-C-methyl-D-erythritol kinase from Bradyrhizobium diazoefficiens (strain JCM 10833 / BCRC 13528 / IAM 13628 / NBRC 14792 / USDA 110).